A 123-amino-acid chain; its full sequence is Small ribosomal subunit protein uS11 (123 aa).

The tract at residues 1-22 (MAKKRKKKLSSPEGISHIHASA) is disordered.

Belongs to the universal ribosomal protein uS11 family. Part of the 30S ribosomal subunit. Interacts with proteins S7 and S18. Binds to IF-3.

Located on the platform of the 30S subunit, it bridges several disparate RNA helices of the 16S rRNA. Forms part of the Shine-Dalgarno cleft in the 70S ribosome. This Malacoplasma penetrans (strain HF-2) (Mycoplasma penetrans) protein is Small ribosomal subunit protein uS11.